Reading from the N-terminus, the 467-residue chain is UDP-N-acetylmuramoylalanine--D-glutamate ligase (467 aa).

121–127 (GTNGKST) lines the ATP pocket.

It belongs to the MurCDEF family.

It localises to the cytoplasm. It carries out the reaction UDP-N-acetyl-alpha-D-muramoyl-L-alanine + D-glutamate + ATP = UDP-N-acetyl-alpha-D-muramoyl-L-alanyl-D-glutamate + ADP + phosphate + H(+). Its pathway is cell wall biogenesis; peptidoglycan biosynthesis. Functionally, cell wall formation. Catalyzes the addition of glutamate to the nucleotide precursor UDP-N-acetylmuramoyl-L-alanine (UMA). This Brucella abortus (strain 2308) protein is UDP-N-acetylmuramoylalanine--D-glutamate ligase.